We begin with the raw amino-acid sequence, 248 residues long: Metallo-beta-lactamase type 2 (248 aa).

Positions 1-21 (MKRLKGLLVLALGFTGLQVFG) are cleaved as a signal peptide. The Zn(2+) site is built by His-97, His-99, Asp-101, His-160, and Cys-179. Residue Lys-182 participates in substrate binding. Zn(2+) is bound at residue His-221.

This sequence belongs to the metallo-beta-lactamase superfamily. Class-B beta-lactamase family. As to quaternary structure, monomer. It depends on Zn(2+) as a cofactor.

It is found in the periplasm. The enzyme catalyses a beta-lactam + H2O = a substituted beta-amino acid. Functionally, confers resistance to the different beta-lactams antibiotics (penicillin, cephalosporin and carbapenem) via the hydrolysis of the beta-lactam ring. This chain is Metallo-beta-lactamase type 2 (blaB6), found in Elizabethkingia meningoseptica (Chryseobacterium meningosepticum).